Here is a 96-residue protein sequence, read N- to C-terminus: Co-chaperonin GroES (96 aa).

It belongs to the GroES chaperonin family. Heptamer of 7 subunits arranged in a ring. Interacts with the chaperonin GroEL.

The protein localises to the cytoplasm. In terms of biological role, together with the chaperonin GroEL, plays an essential role in assisting protein folding. The GroEL-GroES system forms a nano-cage that allows encapsulation of the non-native substrate proteins and provides a physical environment optimized to promote and accelerate protein folding. GroES binds to the apical surface of the GroEL ring, thereby capping the opening of the GroEL channel. This Caulobacter vibrioides (strain ATCC 19089 / CIP 103742 / CB 15) (Caulobacter crescentus) protein is Co-chaperonin GroES.